Reading from the N-terminus, the 464-residue chain is Phosphoenolpyruvate carboxylase (464 aa).

It belongs to the PEPCase type 2 family. In terms of assembly, homotetramer. It depends on Mg(2+) as a cofactor.

It catalyses the reaction oxaloacetate + phosphate = phosphoenolpyruvate + hydrogencarbonate. Catalyzes the irreversible beta-carboxylation of phosphoenolpyruvate (PEP) to form oxaloacetate (OAA), a four-carbon dicarboxylic acid source for the tricarboxylic acid cycle. In Thermofilum pendens (strain DSM 2475 / Hrk 5), this protein is Phosphoenolpyruvate carboxylase.